A 168-amino-acid chain; its full sequence is G/U mismatch-specific DNA glycosylase (168 aa).

It belongs to the uracil-DNA glycosylase (UDG) superfamily. TDG/mug family. As to quaternary structure, binds DNA as a monomer.

It is found in the cytoplasm. The enzyme catalyses Specifically hydrolyzes mismatched double-stranded DNA and polynucleotides, releasing free uracil.. Functionally, excises ethenocytosine and uracil, which can arise by alkylation or deamination of cytosine, respectively, from the corresponding mispairs with guanine in ds-DNA. It is capable of hydrolyzing the carbon-nitrogen bond between the sugar-phosphate backbone of the DNA and the mispaired base. The complementary strand guanine functions in substrate recognition. Required for DNA damage lesion repair in stationary-phase cells. This Salmonella gallinarum (strain 287/91 / NCTC 13346) protein is G/U mismatch-specific DNA glycosylase.